A 415-amino-acid polypeptide reads, in one-letter code: Zinc finger protein ZFMSA12A (415 aa).

The interval 1–36 (MGIQDARWPSEDEETHLLDSSSAEQTRGEKCSDSTP) is disordered. C2H2-type zinc fingers lie at residues 78–100 (HKCT…QRLH), 106–129 (YRCS…RTQC), 134–156 (YICI…QCVH), 161–183 (FDCS…ELTH), 189–211 (FTCR…QKIH), 217–239 (NQCM…EVRH), 245–267 (QICA…MRSH), 273–295 (FQCT…VRTH), 301–323 (YLCS…RRTH), 329–351 (YKCS…MRVH), 357–379 (YVCS…SMNH), and 385–407 (YACQ…LKTH).

It localises to the nucleus. The sequence is that of Zinc finger protein ZFMSA12A from Micropterus salmoides (Largemouth bass).